The chain runs to 490 residues: Adenylosuccinate synthetase, chloroplastic (490 aa).

A chloroplast-targeting transit peptide spans M1 to A45. S46 is modified (N-acetylserine). Residues G77 to K83 and G105 to T107 each bind GTP. D78 (proton acceptor) is an active-site residue. Residues D78 and G105 each coordinate Mg(2+). IMP-binding positions include D78 to K81, N103 to H106, T195, R209, Q289, T304, and R368. H106 serves as the catalytic Proton donor. A substrate-binding site is contributed by T364–R370. GTP contacts are provided by residues R370, K396–D398, and G479–G481.

This sequence belongs to the adenylosuccinate synthetase family. As to quaternary structure, homodimer. It depends on Mg(2+) as a cofactor.

The protein localises to the plastid. The protein resides in the chloroplast. It catalyses the reaction IMP + L-aspartate + GTP = N(6)-(1,2-dicarboxyethyl)-AMP + GDP + phosphate + 2 H(+). It functions in the pathway purine metabolism; AMP biosynthesis via de novo pathway; AMP from IMP: step 1/2. Its function is as follows. Plays an important role in the de novo pathway and in the salvage pathway of purine nucleotide biosynthesis. Catalyzes the first committed step in the biosynthesis of AMP from IMP. The sequence is that of Adenylosuccinate synthetase, chloroplastic from Arabidopsis thaliana (Mouse-ear cress).